The sequence spans 306 residues: tRNA dimethylallyltransferase (306 aa).

14–21 (GPTAAGKS) contributes to the ATP binding site. 16–21 (TAAGKS) provides a ligand contact to substrate. An interaction with substrate tRNA region spans residues 39-42 (DSRL).

The protein belongs to the IPP transferase family. Monomer. Mg(2+) serves as cofactor.

The enzyme catalyses adenosine(37) in tRNA + dimethylallyl diphosphate = N(6)-dimethylallyladenosine(37) in tRNA + diphosphate. In terms of biological role, catalyzes the transfer of a dimethylallyl group onto the adenine at position 37 in tRNAs that read codons beginning with uridine, leading to the formation of N6-(dimethylallyl)adenosine (i(6)A). The polypeptide is tRNA dimethylallyltransferase (Synechococcus sp. (strain ATCC 27144 / PCC 6301 / SAUG 1402/1) (Anacystis nidulans)).